We begin with the raw amino-acid sequence, 142 residues long: Hemoglobin subunit alpha-2 (142 aa).

The Globin domain maps to 2–142; the sequence is VLSAADKSNI…VSTVLTSKYR (141 aa). His-59 contributes to the O2 binding site. His-88 is a binding site for heme b.

It belongs to the globin family. As to quaternary structure, heterotetramer of two alpha chains and two beta chains. As to expression, red blood cells.

In terms of biological role, involved in oxygen transport from the lung to the various peripheral tissues. In Bubalus bubalis (Domestic water buffalo), this protein is Hemoglobin subunit alpha-2.